Here is a 376-residue protein sequence, read N- to C-terminus: Putative F-box protein At1g53370 (376 aa).

The 50-residue stretch at R22–K71 folds into the F-box domain.

In Arabidopsis thaliana (Mouse-ear cress), this protein is Putative F-box protein At1g53370.